Here is a 216-residue protein sequence, read N- to C-terminus: Probable GTP-binding protein EngB (216 aa).

Residues 37–214 (QGLEVAFAGR…RAAIIKLVAE (178 aa)) enclose the EngB-type G domain. GTP contacts are provided by residues 45 to 52 (GRSNVGKS), 72 to 76 (GRTQE), 92 to 95 (DMPG), 159 to 162 (TKAD), and 193 to 195 (TSS). Mg(2+)-binding residues include Ser52 and Thr74.

The protein belongs to the TRAFAC class TrmE-Era-EngA-EngB-Septin-like GTPase superfamily. EngB GTPase family. The cofactor is Mg(2+).

In terms of biological role, necessary for normal cell division and for the maintenance of normal septation. The protein is Probable GTP-binding protein EngB of Rhodopseudomonas palustris (strain BisA53).